The sequence spans 406 residues: MTSGVKKVVLAYSGGLDTSVILKWLQETYRCEVVTFTADLGQGEELEPARAKAQMLGIRPENIFIDDLREEFVRDFVFPMFRANTLYEGTYLLGTSIARPLISKRQIEIANLVGADAVAHGATGKGNDQVRFELGYYALKPDVRVIAPWREWQLNSRTALLDFAEKHQIPIAKDKRGEAPYSTDANLLHISYEGKALEDPWVEPDEDMFTRSVAPEKAPDEPEYVEIEFAKGDPVAVNGQRLSPAALLTELNRLGGKHGIGRLDLVENRFVGMKSRGVYETPGGTLLSVAHRGMESITLDREAMHLKDEVMPRYAKLIYNGFWFSPEREALQALIDSTQARVNGVVRLKLFKGSARVVGRQSPNSLYRLDYVTFEADSVYNQKDAEGFIKLNALRLRLGTIAKQKG.

ATP is bound by residues alanine 11–serine 19 and alanine 38. L-citrulline contacts are provided by tyrosine 91 and serine 96. Glycine 121 lines the ATP pocket. Threonine 123, asparagine 127, and aspartate 128 together coordinate L-aspartate. An L-citrulline-binding site is contributed by asparagine 127. The L-citrulline site is built by arginine 131, serine 182, serine 191, glutamate 267, and tyrosine 279.

It belongs to the argininosuccinate synthase family. Type 1 subfamily. As to quaternary structure, homotetramer.

Its subcellular location is the cytoplasm. The catalysed reaction is L-citrulline + L-aspartate + ATP = 2-(N(omega)-L-arginino)succinate + AMP + diphosphate + H(+). The protein operates within amino-acid biosynthesis; L-arginine biosynthesis; L-arginine from L-ornithine and carbamoyl phosphate: step 2/3. The polypeptide is Argininosuccinate synthase (Rhodospirillum centenum (strain ATCC 51521 / SW)).